The primary structure comprises 853 residues: Trimethylguanosine synthase (853 aa).

The disordered stretch occupies residues 54–84 (NNAGDQGTEEEEDGHSNGTAESHSPNESDLD). Thr-61 carries the post-translational modification Phosphothreonine. The segment covering 69 to 80 (SNGTAESHSPNE) has biased composition (polar residues). 4 positions are modified to phosphoserine: Ser-81, Ser-85, Ser-92, and Ser-139. Residue Tyr-144 is modified to Phosphotyrosine. Ser-152 is subject to Phosphoserine. Disordered regions lie at residues 328–437 (VEQS…DDNG) and 523–549 (ETSQDSLSQNKMQDTCTSSDSEEQDMS). A compositionally biased stretch (basic and acidic residues) spans 365–383 (KENDISENRSSDQPAKELQ). A phosphoserine mark is found at Ser-405 and Ser-431. Residues 424-435 (DVDENPDSEVDD) are compositionally biased toward acidic residues. Polar residues predominate over residues 526 to 541 (QDSLSQNKMQDTCTSS). At Ser-572 the chain carries Phosphoserine. The disordered stretch occupies residues 594 to 623 (CSTEEIPNSPHAETEVEIKKKKKKNKNKKI). Residues 612 to 621 (KKKKKKNKNK) are compositionally biased toward basic residues. Residue Asp-711 participates in S-adenosyl-L-methionine binding.

It belongs to the methyltransferase superfamily. Trimethylguanosine synthase family. As to quaternary structure, may form homooligomers. Interacts with CREBBP/CBP, EED/WAIT1, EP300/P300, NCOA6/PRIP, PPARBP/PBP and SMN. In terms of tissue distribution, ubiquitously expressed.

The protein resides in the cytoplasm. Its subcellular location is the nucleus. It is found in the cajal body. It localises to the nucleolus. The catalysed reaction is a 5'-end (N(7)-methyl 5'-triphosphoguanosine)-ribonucleoside in snRNA + S-adenosyl-L-methionine = a 5'-end (N(2),N(7)-dimethyl 5'-triphosphoguanosine)-ribonucleoside in snRNA + S-adenosyl-L-homocysteine + H(+). The enzyme catalyses a 5'-end (N(7)-methyl 5'-triphosphoguanosine)-ribonucleoside in snoRNA + S-adenosyl-L-methionine = a 5'-end (N(2),N(7)-dimethyl 5'-triphosphoguanosine)-ribonucleoside in snoRNA + S-adenosyl-L-homocysteine + H(+). It catalyses the reaction a 5'-end (N(2),N(7)-dimethyl 5'-triphosphoguanosine)-ribonucleoside in snRNA + S-adenosyl-L-methionine = a 5'-end (N(2),N(2),N(7)-trimethyl 5'-triphosphoguanosine)-ribonucleoside in snRNA + S-adenosyl-L-homocysteine + H(+). It carries out the reaction a 5'-end (N(2),N(7)-dimethyl 5'-triphosphoguanosine)-ribonucleoside in snoRNA + S-adenosyl-L-methionine = a 5'-end (N(2),N(2),N(7)-trimethyl 5'-triphosphoguanosine)-ribonucleoside in snoRNA + S-adenosyl-L-homocysteine + H(+). Catalyzes the 2 serial methylation steps for the conversion of the 7-monomethylguanosine (m(7)G) caps of snRNAs and snoRNAs to a 2,2,7-trimethylguanosine (m(2,2,7)G) cap structure. The enzyme is specific for guanine, and N7 methylation must precede N2 methylation. Hypermethylation of the m7G cap of U snRNAs leads to their concentration in nuclear foci, their colocalization with coilin and the formation of canonical Cajal bodies (CBs). Plays a role in transcriptional regulation. The protein is Trimethylguanosine synthase (Tgs1) of Mus musculus (Mouse).